A 369-amino-acid polypeptide reads, in one-letter code: Aminomethyltransferase (369 aa).

This sequence belongs to the GcvT family. As to quaternary structure, the glycine cleavage system is composed of four proteins: P, T, L and H.

The enzyme catalyses N(6)-[(R)-S(8)-aminomethyldihydrolipoyl]-L-lysyl-[protein] + (6S)-5,6,7,8-tetrahydrofolate = N(6)-[(R)-dihydrolipoyl]-L-lysyl-[protein] + (6R)-5,10-methylene-5,6,7,8-tetrahydrofolate + NH4(+). The glycine cleavage system catalyzes the degradation of glycine. The polypeptide is Aminomethyltransferase (Xanthomonas oryzae pv. oryzae (strain MAFF 311018)).